The sequence spans 380 residues: Endo-polygalacturonase (380 aa).

The first 17 residues, 1 to 17 (MVHILSSALSLLRLGAA), serve as a signal peptide directing secretion. The propeptide occupies 18 to 42 (VSAAPAPAPTAAPNVADALAAVEKR). Cysteine 46 and cysteine 64 are disulfide-bonded. PbH1 repeat units follow at residues 178–207 (ASGLTLSGITIDNSAGNSLGHNTDAFDVGS), 208–229 (STDITISGANVQNQDDCLAINS), 230–250 (GTGITFTGGTCSGGHGLSIGS), 259–280 (VSDVIIESSTVKNSANGVRIKT), 288–310 (VSGVTYKDITLSGITSYGVVIEQ), and 322–343 (TSGVPITGVTLSNVHGTVSSSA). The active-site Proton donor is the aspartate 222. An intrachain disulfide couples cysteine 224 to cysteine 240. Histidine 244 is a catalytic residue. Cysteine 350 and cysteine 353 form a disulfide bridge. An N-linked (GlcNAc...) asparagine glycan is attached at asparagine 361. Residues cysteine 371 and cysteine 380 are joined by a disulfide bond.

This sequence belongs to the glycosyl hydrolase 28 family.

The protein localises to the secreted. It carries out the reaction (1,4-alpha-D-galacturonosyl)n+m + H2O = (1,4-alpha-D-galacturonosyl)n + (1,4-alpha-D-galacturonosyl)m.. The sequence is that of Endo-polygalacturonase (PG1) from Sclerotinia sclerotiorum (White mold).